Consider the following 1162-residue polypeptide: Glycerophosphocholine phosphodiesterase GDE1 (1162 aa).

Positions Met-1 to Val-155 constitute an SPX domain. 6 ANK repeats span residues Tyr-346–Leu-375, Glu-392–Leu-421, Cys-423–Tyr-452, Arg-458–Ile-487, Phe-492–Ile-521, and Ser-525–Leu-554. The GP-PDE domain maps to Thr-817–Leu-1146.

It belongs to the GDE1 family.

The protein localises to the cytoplasm. It catalyses the reaction sn-glycerol 3-phosphocholine + H2O = sn-glycerol 3-phosphate + choline + H(+). Glycerophosphocholine glycerophosphodiesterase responsible for the hydrolysis of intracellular glycerophosphocholine into glycerol-phosphate and choline. The choline is used for phosphatidyl-choline synthesis. Required for utilization of glycerophosphocholine as phosphate source. C.albicans can utilize GroPCho through transport and intracellular hydrolysis or through extracellular hydrolysis. The protein is Glycerophosphocholine phosphodiesterase GDE1 of Candida albicans (strain SC5314 / ATCC MYA-2876) (Yeast).